The sequence spans 577 residues: Copine-8 (577 aa).

2 consecutive C2 domains span residues Thr19 to Lys146 and Lys155 to Tyr278. 12 residues coordinate Ca(2+): Asp52, Asp58, Asp112, Asp114, Ser117, Lys122, Asp124, Asp186, Asp192, Asp248, Asp250, and Asp256. Ser273 is modified (phosphoserine). Positions Asn322–Ile523 constitute a VWFA domain.

This sequence belongs to the copine family. Ca(2+) is required as a cofactor.

Its function is as follows. Probable calcium-dependent phospholipid-binding protein that may play a role in calcium-mediated intracellular processes. The polypeptide is Copine-8 (Mus musculus (Mouse)).